The chain runs to 180 residues: uncharacterized protein (180 aa).

Residues 1–22 (MKRSIIAAAVFSSFFMSAGVFA) form the signal peptide.

This sequence belongs to the fimbrial protein family.

Functionally, part of the yehABCD fimbrial operon. Could contribute to adhesion to various surfaces in specific environmental niches. This is an uncharacterized protein from Escherichia coli (strain K12).